The primary structure comprises 483 residues: Altronate oxidoreductase (483 aa).

Ile-18–Ala-29 provides a ligand contact to NAD(+).

This sequence belongs to the mannitol dehydrogenase family. UxaB subfamily.

It catalyses the reaction D-altronate + NAD(+) = keto-D-tagaturonate + NADH + H(+). The protein operates within carbohydrate metabolism; pentose and glucuronate interconversion. This chain is Altronate oxidoreductase, found in Escherichia coli (strain 55989 / EAEC).